The primary structure comprises 219 residues: Large ribosomal subunit protein uL4 (219 aa).

Positions 45–103 are disordered; the sequence is ARRQGTHATKTRGQVRGGGRKPYRQKGTGRARQGSIRAPQFTGGGTVHGPQPRDYDQRT. A compositionally biased stretch (basic residues) spans 62–73; sequence GGRKPYRQKGTG.

The protein belongs to the universal ribosomal protein uL4 family. As to quaternary structure, part of the 50S ribosomal subunit.

Its function is as follows. One of the primary rRNA binding proteins, this protein initially binds near the 5'-end of the 23S rRNA. It is important during the early stages of 50S assembly. It makes multiple contacts with different domains of the 23S rRNA in the assembled 50S subunit and ribosome. In terms of biological role, forms part of the polypeptide exit tunnel. This chain is Large ribosomal subunit protein uL4, found in Corynebacterium kroppenstedtii (strain DSM 44385 / JCM 11950 / CIP 105744 / CCUG 35717).